The following is a 337-amino-acid chain: MVVKVGINGFGRIGRLVIRNALEAQGVEVVAVNDPFIPLDYMVYMFKFDSVHGRYKGTVEAKDGKLIIAGKPIAVFGERDPASIPWGASGADYVVESTGVFTTIDKASAHLKGGAKKVIISAPSADAPMYVCGVNLDAYDPRRPSISNASCTTNCLAPLAKVIHDKFGIVEGLMSTIHATTATQKTVDGPSNKDWRGGRSVNNNIIPSSTGAAKAVGKVIPSLNGKLTGLSFRVPTLDVSVVDLVVRLEKEATYDEIKAAVKEAVAGPLKGILDYTEDALVSTDFTGNTHSSIFDASAGIALNKNFVKLIAWYDNEWGYSRRVVDLITFVAQKDGNA.

NAD(+) contacts are provided by residues 12 to 13 (RI), Asp34, and Arg79. D-glyceraldehyde 3-phosphate contacts are provided by residues 150 to 152 (SCT), Thr181, 210 to 211 (TG), and Arg233. Cys151 serves as the catalytic Nucleophile. NAD(+) is bound at residue Asn315.

This sequence belongs to the glyceraldehyde-3-phosphate dehydrogenase family. As to quaternary structure, homotetramer.

The protein resides in the cytoplasm. It catalyses the reaction D-glyceraldehyde 3-phosphate + phosphate + NAD(+) = (2R)-3-phospho-glyceroyl phosphate + NADH + H(+). The protein operates within carbohydrate degradation; glycolysis; pyruvate from D-glyceraldehyde 3-phosphate: step 1/5. The protein is Glyceraldehyde-3-phosphate dehydrogenase (GPD) of Omphalotus olearius (Jack o'lantern).